Consider the following 1511-residue polypeptide: ATP-dependent permease PDR12 (1511 aa).

A compositionally biased stretch (basic and acidic residues) spans 1–21 (MSSTDEHIEKDISSRSNHDDD). The disordered stretch occupies residues 1-37 (MSSTDEHIEKDISSRSNHDDDYANSVQSYAASEGQVD). S2 carries the post-translational modification N-acetylserine. Residues 2-508 (SSTDEHIEKD…RGFQRVKGDS (507 aa)) are Cytoplasmic-facing. 3 positions are modified to phosphoserine: S32, S52, and S56. The ABC transporter 1 domain occupies 144–397 (IPAHLISKFT…FQRMGWVKPN (254 aa)). K426 participates in a covalent cross-link: Glycyl lysine isopeptide (Lys-Gly) (interchain with G-Cter in ubiquitin). A helical membrane pass occupies residues 509-529 (TYTKVYLSSFLIKALIIGSMF). Residues 530–548 (HKIDDKSQSTTAGAYSRGG) are Extracellular-facing. A helical membrane pass occupies residues 549–569 (MLFYVLLFASVTSLAEIGNSF). Residues 570-597 (SSRPVIVKHKSYSMYHLSAESLQEIITE) lie on the Cytoplasmic side of the membrane. Residues 598-618 (FPTKFVAIVILCLITYWIPFM) form a helical membrane-spanning segment. At 619 to 622 (KYEA) the chain is on the extracellular side. A helical transmembrane segment spans residues 623-643 (GAFFQYILYLLTVQQCTSFIF). Residues 644 to 657 (KFVATMSKSGVDAH) lie on the Cytoplasmic side of the membrane. A helical transmembrane segment spans residues 658 to 678 (AVGGLWVLMLCVYAGFVLPIG). Residues 679 to 765 (EMHHWIRWLH…FAYKHAWRNW (87 aa)) lie on the Extracellular side of the membrane. Residues 766-786 (GVNIVWTFGYIVFNVILSEYL) traverse the membrane as a helical segment. The Cytoplasmic segment spans residues 787 to 1182 (KPVEGGGDLL…WRSPVYIRAK (396 aa)). In terms of domain architecture, ABC transporter 2 spans 836 to 1084 (IAEKDVFTWN…TLLKYFERQS (249 aa)). Residues 878–885 (GESGAGKT) and 972–979 (AEALVGKT) each bind ATP. Residues 1183–1203 (FFECVACALFVGLSYVGVNHS) form a helical membrane-spanning segment. Position 1204 (V1204) is a topological domain, extracellular. The chain crosses the membrane as a helical span at residues 1205-1225 (GGAIEAFSSIFMLLLIALAMI). The Cytoplasmic segment spans residues 1226–1254 (NQLHVFAYDSRELYEVREAASNTFHWSVL). Residues 1255–1275 (LLCHAAVENFWSTLCQFMCFI) form a helical membrane-spanning segment. Topologically, residues 1276–1291 (CYYWPAQFSGRASHAG) are extracellular. Residues 1292-1312 (FFFFFYVLIFPLYFVTYGLWI) form a helical membrane-spanning segment. Over 1313–1318 (LYMSPD) the chain is Cytoplasmic. Residues 1319–1339 (VPSASMINSNLFAAMLLFCGI) traverse the membrane as a helical segment. Residues 1340–1444 (LQPREKMPAF…NVKWDHRWRN (105 aa)) are Extracellular-facing. The N-linked (GlcNAc...) asparagine glycan is linked to N1405. A helical membrane pass occupies residues 1445 to 1465 (FGFMWAYICFNIAAMLICYYV). Topologically, residues 1466 to 1511 (VRVKVWSLKSVLNFKKWFNGPRKERHEKDTNIFQTVPGDENKITKK) are cytoplasmic.

Belongs to the ABC transporter superfamily. ABCG family. PDR (TC 3.A.1.205) subfamily.

It is found in the cell membrane. Its function is as follows. Plasma membrane transporter which mediates resistance to water-soluble, monocarboxylic acids with chain lengths of from C1 to C7 by active extrusion of the preservative anions from the cytosol. Also involved in the export of aromatic and branched-chain organic acids produced in amino acid catabolism. In Saccharomyces cerevisiae (strain ATCC 204508 / S288c) (Baker's yeast), this protein is ATP-dependent permease PDR12 (PDR12).